Here is a 266-residue protein sequence, read N- to C-terminus: Putative carbamate hydrolase RutD (266 aa).

The 102-residue stretch at P14–L115 folds into the AB hydrolase-1 domain.

This sequence belongs to the AB hydrolase superfamily. Hydrolase RutD family.

The enzyme catalyses carbamate + 2 H(+) = NH4(+) + CO2. Its function is as follows. Involved in pyrimidine catabolism. May facilitate the hydrolysis of carbamate, a reaction that can also occur spontaneously. The protein is Putative carbamate hydrolase RutD of Shigella flexneri serotype X (strain 2002017).